Consider the following 848-residue polypeptide: Coiled-coil and C2 domain-containing protein 1B (848 aa).

The span at methionine 1–proline 10 shows a compositional bias: basic residues. Disordered stretches follow at residues methionine 1–lysine 21 and alanine 53–methionine 75. The stretch at leucine 165–arginine 193 forms a coiled coil. Disordered regions lie at residues glutamate 217–proline 276, valine 326–glycine 353, aspartate 433–valine 460, and alanine 476–valine 523. A compositionally biased stretch (pro residues) spans proline 438–glycine 448. Serine 455 carries the post-translational modification Phosphoserine. Acidic residues predominate over residues alanine 476–aspartate 485. Low complexity-rich tracts occupy residues proline 487–glutamine 498 and glutamate 509–serine 522. Phosphoserine is present on serine 583. Threonine 586 carries the post-translational modification Phosphothreonine. Positions leucine 600–leucine 626 form a coiled coil. The C2 domain occupies aspartate 666 to methionine 805.

It belongs to the CC2D1 family. As to quaternary structure, interacts with CHMP4B.

It localises to the nucleus. Its function is as follows. Transcription factor that binds specifically to the DRE (dual repressor element) and represses HTR1A gene transcription in neuronal cells. This chain is Coiled-coil and C2 domain-containing protein 1B (Cc2d1b), found in Mus musculus (Mouse).